Reading from the N-terminus, the 421-residue chain is ATP-dependent RNA helicase RhlB (421 aa).

The short motif at 9 to 37 (THFADLPINEQVVKALSAANFSHCTPIQA) is the Q motif element. The Helicase ATP-binding domain maps to 40 to 216 (LPPLLEGNDI…YEHMDNPTHV (177 aa)). Residue 53–60 (AQTGTGKT) participates in ATP binding. A DEAD box motif is present at residues 162–165 (DEAD). The region spanning 240 to 387 (KMALLLSLME…VTEYQADALL (148 aa)) is the Helicase C-terminal domain. Residues 389–421 (DVTPPKPRHKKRMQNGRNPQKRQSSGSRNRRKP) are disordered. Over residues 403-415 (NGRNPQKRQSSGS) the composition is skewed to polar residues.

It belongs to the DEAD box helicase family. RhlB subfamily. In terms of assembly, component of the RNA degradosome, which is a multiprotein complex involved in RNA processing and mRNA degradation.

It is found in the cytoplasm. It carries out the reaction ATP + H2O = ADP + phosphate + H(+). Functionally, DEAD-box RNA helicase involved in RNA degradation. Has RNA-dependent ATPase activity and unwinds double-stranded RNA. This is ATP-dependent RNA helicase RhlB from Pseudoalteromonas atlantica (strain T6c / ATCC BAA-1087).